The chain runs to 123 residues: Large ribosomal subunit protein bL12 (123 aa).

Belongs to the bacterial ribosomal protein bL12 family. In terms of assembly, homodimer. Part of the ribosomal stalk of the 50S ribosomal subunit. Forms a multimeric L10(L12)X complex, where L10 forms an elongated spine to which 2 to 4 L12 dimers bind in a sequential fashion. Binds GTP-bound translation factors.

In terms of biological role, forms part of the ribosomal stalk which helps the ribosome interact with GTP-bound translation factors. Is thus essential for accurate translation. The polypeptide is Large ribosomal subunit protein bL12 (Geobacillus thermodenitrificans (strain NG80-2)).